The following is a 386-amino-acid chain: Putative F-box/kelch-repeat protein At3g17280 (386 aa).

Residues 1-48 (MTTISDLPYDLLPEILSRLPTKSIPKLKTTCKKWYALFKDPKFVEKKL) form the F-box domain. 2 Kelch repeats span residues 155 to 203 (SYKI…LKES) and 340 to 386 (RIYI…IVEV).

This Arabidopsis thaliana (Mouse-ear cress) protein is Putative F-box/kelch-repeat protein At3g17280.